The chain runs to 448 residues: uncharacterized protein (448 aa).

A compositionally biased stretch (polar residues) spans 428–440 (PFKTDCDPNNDND). The disordered stretch occupies residues 428 to 448 (PFKTDCDPNNDNDLTPPAVFG).

This is an uncharacterized protein from Mycoplasma pneumoniae (strain ATCC 29342 / M129 / Subtype 1) (Mycoplasmoides pneumoniae).